The sequence spans 355 residues: Guanine nucleotide-binding protein G(i) subunit alpha-2 (355 aa).

G2 carries N-myristoyl glycine lipidation. The S-palmitoyl cysteine moiety is linked to residue C3. Residues 32 to 355 (REVKLLLLGA…KNNLKDCGLF (324 aa)) form the G-alpha domain. Residues 35-48 (KLLLLGAGESGKST) form a G1 motif region. Residues 40-47 (GAGESGKS), 176-182 (LRTRVKT), 201-205 (DVGGQ), 270-273 (NKKD), and A327 contribute to the GTP site. Positions 47 and 182 each coordinate Mg(2+). The segment at 174-182 (DVLRTRVKT) is G2 motif. Residues 197–206 (FKMFDVGGQR) are G3 motif. Residues 266-273 (ILFLNKKD) form a G4 motif region. Positions 325-330 (TCATDT) are G5 motif.

It belongs to the G-alpha family. G(i/o/t/z) subfamily. G proteins are composed of 3 units; alpha, beta and gamma. The alpha chain contains the guanine nucleotide binding site.

Its subcellular location is the cytoplasm. The protein resides in the cytoskeleton. It localises to the microtubule organizing center. The protein localises to the centrosome. It is found in the cell membrane. Its function is as follows. Guanine nucleotide-binding proteins (G proteins) are involved as modulators or transducers in various transmembrane signaling systems. The G(i) proteins are involved in hormonal regulation of adenylate cyclase: they inhibit the cyclase in response to beta-adrenergic stimuli. May play a role in cell division. The chain is Guanine nucleotide-binding protein G(i) subunit alpha-2 (GNAI2) from Gallus gallus (Chicken).